The chain runs to 101 residues: Small ribosomal subunit protein uS14 (101 aa).

This sequence belongs to the universal ribosomal protein uS14 family. In terms of assembly, part of the 30S ribosomal subunit. Contacts proteins S3 and S10.

Functionally, binds 16S rRNA, required for the assembly of 30S particles and may also be responsible for determining the conformation of the 16S rRNA at the A site. In Aeromonas salmonicida (strain A449), this protein is Small ribosomal subunit protein uS14.